The following is a 105-amino-acid chain: Protamine-2 (105 aa).

A disordered region spans residues 1–74 (MVRYRMRSPS…RRSCRRRRRH (74 aa)). 2 positions are modified to phosphoserine: Ser8 and Ser10. Residues 33 to 42 (NPERVEDYGR) are compositionally biased toward basic and acidic residues. Residues 43-74 (THRGHHRHRRCSRKRLHRIHKRRRSCRRRRRH) are compositionally biased toward basic residues.

Belongs to the protamine P2 family. As to quaternary structure, interacts with TDRP. In terms of processing, proteolytic processing into mature chains is required for histone eviction during spermatogenesis. Transition proteins (TNP1 and TNP2) are required for processing. As to expression, testis.

Its subcellular location is the nucleus. It localises to the chromosome. Functionally, protamines substitute for histones in the chromatin of sperm during the haploid phase of spermatogenesis. They compact sperm DNA into a highly condensed, stable and inactive complex. This Rattus tunneyi (Tunney's rat) protein is Protamine-2 (Prm2).